Consider the following 308-residue polypeptide: Porphobilinogen deaminase (308 aa).

Cys-241 carries the S-(dipyrrolylmethanemethyl)cysteine modification.

It belongs to the HMBS family. In terms of assembly, monomer. Dipyrromethane serves as cofactor.

The catalysed reaction is 4 porphobilinogen + H2O = hydroxymethylbilane + 4 NH4(+). It functions in the pathway porphyrin-containing compound metabolism; protoporphyrin-IX biosynthesis; coproporphyrinogen-III from 5-aminolevulinate: step 2/4. Its function is as follows. Tetrapolymerization of the monopyrrole PBG into the hydroxymethylbilane pre-uroporphyrinogen in several discrete steps. This Staphylococcus aureus (strain MRSA252) protein is Porphobilinogen deaminase.